We begin with the raw amino-acid sequence, 876 residues long: Alanine--tRNA ligase (876 aa).

K74 carries the post-translational modification N6-acetyllysine. Zn(2+)-binding residues include H564, H568, C666, and H670.

The protein belongs to the class-II aminoacyl-tRNA synthetase family. As to quaternary structure, homotetramer. It depends on Zn(2+) as a cofactor.

The protein resides in the cytoplasm. The catalysed reaction is tRNA(Ala) + L-alanine + ATP = L-alanyl-tRNA(Ala) + AMP + diphosphate. In terms of biological role, catalyzes the attachment of alanine to tRNA(Ala) in a two-step reaction: alanine is first activated by ATP to form Ala-AMP and then transferred to the acceptor end of tRNA(Ala). Also edits incorrectly charged Ser-tRNA(Ala) and Gly-tRNA(Ala) via its editing domain. The protein is Alanine--tRNA ligase of Shigella boydii serotype 18 (strain CDC 3083-94 / BS512).